A 519-amino-acid polypeptide reads, in one-letter code: Aldehyde dehydrogenase X, mitochondrial (519 aa).

A mitochondrion-targeting transit peptide spans 1 to 19 (MLTARLLLPRLLCLQGRTT). Lysine 53 is modified (N6-acetyllysine). An N6-acetyllysine; alternate modification is found at lysine 54. Position 54 is an N6-succinyllysine; alternate (lysine 54). Lysine 83 carries the post-translational modification N6-succinyllysine. 264–269 (GSTEVG) is a binding site for NAD(+). Residue glutamate 287 is the Proton acceptor of the active site. The Nucleophile role is filled by cysteine 321. 5 positions are modified to N6-acetyllysine; alternate: lysine 366, lysine 385, lysine 401, lysine 416, and lysine 428. Residues lysine 366, lysine 385, lysine 401, lysine 416, and lysine 428 each carry the N6-succinyllysine; alternate modification. An N6-acetyllysine modification is found at lysine 431.

It belongs to the aldehyde dehydrogenase family. As to quaternary structure, homotetramer.

Its subcellular location is the mitochondrion matrix. The catalysed reaction is an aldehyde + NAD(+) + H2O = a carboxylate + NADH + 2 H(+). It functions in the pathway alcohol metabolism; ethanol degradation; acetate from ethanol: step 2/2. Functionally, ALDHs play a major role in the detoxification of alcohol-derived acetaldehyde. They are involved in the metabolism of corticosteroids, biogenic amines, neurotransmitters, and lipid peroxidation. In Mus musculus (Mouse), this protein is Aldehyde dehydrogenase X, mitochondrial (Aldh1b1).